We begin with the raw amino-acid sequence, 633 residues long: DNA repair protein XRCC1 (633 aa).

Position 140 is a phosphoserine (S140). K176 is covalently cross-linked (Glycyl lysine isopeptide (Lys-Gly) (interchain with G-Cter in SUMO1); alternate). Residue K176 forms a Glycyl lysine isopeptide (Lys-Gly) (interchain with G-Cter in SUMO2); alternate linkage. A Phosphothreonine modification is found at T198. S199 is modified (phosphoserine). T202 is modified (phosphothreonine). Residues S204, S226, and S241 each carry the phosphoserine modification. Low complexity predominate over residues 221–231 (AASSASPVSRA). The interval 221-313 (AASSASPVSR…TEPRRPRAGP (93 aa)) is disordered. Basic and acidic residues predominate over residues 240–257 (ESPKGKRKLDLNQEEKKT). T257 carries the post-translational modification Phosphothreonine. Residues S259 and S266 each carry the phosphoserine modification. A compositionally biased stretch (low complexity) spans 277–291 (APTRTPATAPVPARA). T281 is modified (phosphothreonine). Positions 299 to 313 (PRGEGTEPRRPRAGP) are enriched in basic and acidic residues. Residues 315-403 (ELGKILQGVV…RRLPSQRYLM (89 aa)) enclose the BRCT 1 domain. Phosphoserine; by PRKDC is present on S371. 3 disordered regions span residues 400–462 (RYLM…AASP), 471–490 (EGVQ…DTED), and 498–536 (QKEH…DLPV). Phosphoserine occurs at positions 408, 409, 410, and 421. The span at 427 to 443 (KLPQKQPQTKTKPTQAA) shows a compositional bias: low complexity. 2 positions are modified to phosphoserine: S446 and S447. Residues T453 and T457 each carry the phosphothreonine modification. S461 and S485 each carry phosphoserine. The segment covering 481 to 490 (GAEDSGDTED) has biased composition (acidic residues). The residue at position 488 (T488) is a Phosphothreonine. Residue S518 is modified to Phosphoserine. T519 and T523 each carry phosphothreonine. Residues 538-629 (ELPDFFQGKH…KLLPHQLYGV (92 aa)) enclose the BRCT 2 domain.

As to quaternary structure, homodimer. Interacts with polynucleotide kinase (PNK), DNA polymerase-beta (POLB) and DNA ligase III (LIG3). Interacts with APTX and APLF. Interacts with APEX1; the interaction is induced by SIRT1 and increases with the acetylated form of APEX1. Interacts with (poly-ADP-ribosylated) PARP1. In terms of processing, phosphorylation of Ser-371 causes dimer dissociation. Phosphorylation by CK2 promotes interaction with APTX and APLF. Post-translationally, sumoylated. Expressed in fibroblasts, retinal pigmented epithelial cells and lymphoblastoid cells (at protein level).

Its subcellular location is the nucleus. The protein localises to the chromosome. Its function is as follows. Scaffold protein involved in DNA single-strand break repair by mediating the assembly of DNA break repair protein complexes. Negatively regulates ADP-ribosyltransferase activity of PARP1 during base-excision repair in order to prevent excessive PARP1 activity. Recognizes and binds poly-ADP-ribose chains: specifically binds auto-poly-ADP-ribosylated PARP1, limiting its activity. The polypeptide is DNA repair protein XRCC1 (Homo sapiens (Human)).